We begin with the raw amino-acid sequence, 494 residues long: Guanosine-5'-triphosphate,3'-diphosphate pyrophosphatase (494 aa).

This sequence belongs to the GppA/Ppx family. GppA subfamily.

It catalyses the reaction guanosine 3'-diphosphate 5'-triphosphate + H2O = guanosine 3',5'-bis(diphosphate) + phosphate + H(+). It functions in the pathway purine metabolism; ppGpp biosynthesis; ppGpp from GTP: step 2/2. Its function is as follows. Catalyzes the conversion of pppGpp to ppGpp. Guanosine pentaphosphate (pppGpp) is a cytoplasmic signaling molecule which together with ppGpp controls the 'stringent response', an adaptive process that allows bacteria to respond to amino acid starvation, resulting in the coordinated regulation of numerous cellular activities. This Shigella flexneri protein is Guanosine-5'-triphosphate,3'-diphosphate pyrophosphatase.